The sequence spans 234 residues: Elongation factor Tu, chloroplastic (234 aa).

The 125-residue stretch at 1–125 (KNMITGAAQM…KVDSYIPTPE (125 aa)) folds into the tr-type G domain. Residue 47-50 (NKQD) participates in GTP binding.

It belongs to the TRAFAC class translation factor GTPase superfamily. Classic translation factor GTPase family. EF-Tu/EF-1A subfamily.

It localises to the plastid. It is found in the chloroplast. The catalysed reaction is GTP + H2O = GDP + phosphate + H(+). In terms of biological role, GTP hydrolase that promotes the GTP-dependent binding of aminoacyl-tRNA to the A-site of ribosomes during protein biosynthesis. The protein is Elongation factor Tu, chloroplastic (tufA) of Pandorina morum (Freshwater green alga).